Here is a 277-residue protein sequence, read N- to C-terminus: Bifunctional protein FolD (277 aa).

NADP(+)-binding positions include glycine 164 to serine 166, serine 189, and threonine 230.

It belongs to the tetrahydrofolate dehydrogenase/cyclohydrolase family. As to quaternary structure, homodimer.

The catalysed reaction is (6R)-5,10-methylene-5,6,7,8-tetrahydrofolate + NADP(+) = (6R)-5,10-methenyltetrahydrofolate + NADPH. It carries out the reaction (6R)-5,10-methenyltetrahydrofolate + H2O = (6R)-10-formyltetrahydrofolate + H(+). The protein operates within one-carbon metabolism; tetrahydrofolate interconversion. Functionally, catalyzes the oxidation of 5,10-methylenetetrahydrofolate to 5,10-methenyltetrahydrofolate and then the hydrolysis of 5,10-methenyltetrahydrofolate to 10-formyltetrahydrofolate. This is Bifunctional protein FolD from Clostridium perfringens (strain 13 / Type A).